A 276-amino-acid polypeptide reads, in one-letter code: Diaminopimelate epimerase (276 aa).

Substrate is bound by residues Asn13, Gln46, and Asn66. Cys75 functions as the Proton donor in the catalytic mechanism. Residues 76-77 (GN), Asn159, Asn192, and 210-211 (ER) contribute to the substrate site. Cys219 functions as the Proton acceptor in the catalytic mechanism. 220–221 (GT) contacts substrate.

The protein belongs to the diaminopimelate epimerase family. In terms of assembly, homodimer.

It is found in the cytoplasm. It catalyses the reaction (2S,6S)-2,6-diaminopimelate = meso-2,6-diaminopimelate. It functions in the pathway amino-acid biosynthesis; L-lysine biosynthesis via DAP pathway; DL-2,6-diaminopimelate from LL-2,6-diaminopimelate: step 1/1. In terms of biological role, catalyzes the stereoinversion of LL-2,6-diaminopimelate (L,L-DAP) to meso-diaminopimelate (meso-DAP), a precursor of L-lysine and an essential component of the bacterial peptidoglycan. The polypeptide is Diaminopimelate epimerase (Pseudomonas putida (strain GB-1)).